Consider the following 434-residue polypeptide: Beta-phenylalanine transaminase (434 aa).

Arg-41 provides a ligand contact to (S)-3-amino-3-phenylpropanoate. 132 to 133 (GT) is a binding site for pyridoxal 5'-phosphate. Lys-267 carries the post-translational modification N6-(pyridoxal phosphate)lysine. Residue Thr-300 coordinates pyridoxal 5'-phosphate.

Belongs to the class-III pyridoxal-phosphate-dependent aminotransferase family. Homodimer. Requires pyridoxal 5'-phosphate as cofactor.

It catalyses the reaction (S)-3-amino-3-phenylpropanoate + 2-oxoglutarate = 3-oxo-3-phenylpropanoate + L-glutamate. It carries out the reaction (S)-3-amino-3-phenylpropanoate + pyruvate = 3-oxo-3-phenylpropanoate + L-alanine. Its activity is regulated as follows. Is inhibited by 2-aminooxyacetate (AOA), a mimic of beta-alanine and a known inhibitor of aminotransferases. Functionally, aminotransferase that acts exclusively on beta-amino acids and exhibits a broad substrate range in vitro, accepting meta-, para- and, to a lesser extent, ortho-substituted beta-phenylalanine derivatives as amino donors, and 2-oxoglutarate or pyruvate as amino acceptors. Is highly enantioselective toward (S)-beta-phenylalanine (is not active with (R)-beta-phenylalanine) and derivatives with different substituents on the phenyl ring, allowing the kinetic resolution of various racemic beta-amino acids to yield (R)-beta-amino acids with &gt;95% enantiomeric excess (ee). Highly prefers aromatic beta-amino acids over aliphatic beta-amino acids; cannot use beta-alanine or beta-glutamate as substrate. Is likely involved in the beta-phenylalanine degradation pathway that allows V.paradoxus strain CBF3 to use beta-phenylalanine as a sole nitrogen source. The protein is Beta-phenylalanine transaminase of Variovorax paradoxus.